Consider the following 343-residue polypeptide: Tetraacyldisaccharide 4'-kinase (343 aa).

An ATP-binding site is contributed by 47 to 54; that stretch reads SVGGTGKT.

Belongs to the LpxK family.

The catalysed reaction is a lipid A disaccharide + ATP = a lipid IVA + ADP + H(+). The protein operates within glycolipid biosynthesis; lipid IV(A) biosynthesis; lipid IV(A) from (3R)-3-hydroxytetradecanoyl-[acyl-carrier-protein] and UDP-N-acetyl-alpha-D-glucosamine: step 6/6. Functionally, transfers the gamma-phosphate of ATP to the 4'-position of a tetraacyldisaccharide 1-phosphate intermediate (termed DS-1-P) to form tetraacyldisaccharide 1,4'-bis-phosphate (lipid IVA). In Flavobacterium psychrophilum (strain ATCC 49511 / DSM 21280 / CIP 103535 / JIP02/86), this protein is Tetraacyldisaccharide 4'-kinase.